Here is a 323-residue protein sequence, read N- to C-terminus: 3-dehydroquinate synthase (323 aa).

The protein belongs to the archaeal-type DHQ synthase family.

It carries out the reaction 2-amino-2,3,7-trideoxy-D-lyxo-hept-6-ulosonate + NAD(+) + H2O = 3-dehydroquinate + NH4(+) + NADH + H(+). Its function is as follows. Catalyzes the oxidative deamination and cyclization of 2-amino-3,7-dideoxy-D-threo-hept-6-ulosonic acid (ADH) to yield 3-dehydroquinate (DHQ), which is fed into the canonical shikimic pathway of aromatic amino acid biosynthesis. This chain is 3-dehydroquinate synthase, found in Archaeoglobus fulgidus (strain ATCC 49558 / DSM 4304 / JCM 9628 / NBRC 100126 / VC-16).